A 223-amino-acid polypeptide reads, in one-letter code: Large ribosomal subunit protein uL3 (223 aa).

Belongs to the universal ribosomal protein uL3 family. As to quaternary structure, part of the 50S ribosomal subunit. Forms a cluster with proteins L14 and L19.

Functionally, one of the primary rRNA binding proteins, it binds directly near the 3'-end of the 23S rRNA, where it nucleates assembly of the 50S subunit. The chain is Large ribosomal subunit protein uL3 from Mycoplasma capricolum subsp. capricolum (strain California kid / ATCC 27343 / NCTC 10154).